The following is a 212-amino-acid chain: Large ribosomal subunit protein uL3 (212 aa).

A disordered region spans residues 134–154 (RKTHGNSVSHRVPGSIGQNQT). An N5-methylglutamine modification is found at Gln153.

Belongs to the universal ribosomal protein uL3 family. In terms of assembly, part of the 50S ribosomal subunit. Forms a cluster with proteins L14 and L19. Methylated by PrmB.

One of the primary rRNA binding proteins, it binds directly near the 3'-end of the 23S rRNA, where it nucleates assembly of the 50S subunit. This is Large ribosomal subunit protein uL3 from Dichelobacter nodosus (strain VCS1703A).